Consider the following 529-residue polypeptide: Bifunctional purine biosynthesis protein PurH (529 aa).

In terms of domain architecture, MGS-like spans 2–148 (QHLRPIRRAL…KNHKDVTIVV (147 aa)).

The protein belongs to the PurH family.

The catalysed reaction is (6R)-10-formyltetrahydrofolate + 5-amino-1-(5-phospho-beta-D-ribosyl)imidazole-4-carboxamide = 5-formamido-1-(5-phospho-D-ribosyl)imidazole-4-carboxamide + (6S)-5,6,7,8-tetrahydrofolate. It carries out the reaction IMP + H2O = 5-formamido-1-(5-phospho-D-ribosyl)imidazole-4-carboxamide. The protein operates within purine metabolism; IMP biosynthesis via de novo pathway; 5-formamido-1-(5-phospho-D-ribosyl)imidazole-4-carboxamide from 5-amino-1-(5-phospho-D-ribosyl)imidazole-4-carboxamide (10-formyl THF route): step 1/1. Its pathway is purine metabolism; IMP biosynthesis via de novo pathway; IMP from 5-formamido-1-(5-phospho-D-ribosyl)imidazole-4-carboxamide: step 1/1. The polypeptide is Bifunctional purine biosynthesis protein PurH (Proteus mirabilis (strain HI4320)).